A 485-amino-acid polypeptide reads, in one-letter code: Aspartyl protease family protein 2 (485 aa).

An N-terminal signal peptide occupies residues 1 to 23 (MVGRRKALLFSLCFFFLSLPSFS). Positions 43 to 71 (PVSFQPDSDSESLLESEFESGSDSESSSS) are disordered. The span at 50 to 64 (SDSESLLESEFESGS) shows a compositional bias: acidic residues. The Peptidase A1 domain occupies 142 to 480 (YFTRLGVGTP…DLASSRVGFA (339 aa)). Catalysis depends on residues aspartate 160 and aspartate 365.

Belongs to the peptidase A1 family.

Its function is as follows. Aspartyl protease. Not able to cleave BAG6. This chain is Aspartyl protease family protein 2, found in Arabidopsis thaliana (Mouse-ear cress).